The primary structure comprises 186 residues: Ribosome-recycling factor (186 aa).

Belongs to the RRF family.

It is found in the cytoplasm. Responsible for the release of ribosomes from messenger RNA at the termination of protein biosynthesis. May increase the efficiency of translation by recycling ribosomes from one round of translation to another. The chain is Ribosome-recycling factor from Rhodopseudomonas palustris (strain ATCC BAA-98 / CGA009).